The sequence spans 451 residues: Chromosomal replication initiator protein DnaA 2 (451 aa).

The segment at 1-68 (MQAWEEFLKA…QQKFINGNNK (68 aa)) is domain I, interacts with DnaA modulators. The interval 68 to 104 (KRIKIHLSVANTPQRAKKTKTANKEKDFKAPFELTFD) is domain II. The domain III, AAA+ region stretch occupies residues 105–326 (ELDPLCLFPY…KGLEALVLRL (222 aa)). ATP contacts are provided by Gly-156, Gly-158, Lys-159, and Thr-160. The interval 327–451 (HLDAKHSITA…CHIILKKLQG (125 aa)) is domain IV, binds dsDNA.

It belongs to the DnaA family. As to quaternary structure, oligomerizes as a right-handed, spiral filament on DNA at oriC.

It localises to the cytoplasm. Functionally, plays an essential role in the initiation and regulation of chromosomal replication. ATP-DnaA binds to the origin of replication (oriC) to initiate formation of the DNA replication initiation complex once per cell cycle. Binds the DnaA box (a 9 base pair repeat at the origin) and separates the double-stranded (ds)DNA. Forms a right-handed helical filament on oriC DNA; dsDNA binds to the exterior of the filament while single-stranded (ss)DNA is stabiized in the filament's interior. The ATP-DnaA-oriC complex binds and stabilizes one strand of the AT-rich DNA unwinding element (DUE), permitting loading of DNA polymerase. After initiation quickly degrades to an ADP-DnaA complex that is not apt for DNA replication. Binds acidic phospholipids. In Protochlamydia amoebophila (strain UWE25), this protein is Chromosomal replication initiator protein DnaA 2.